A 458-amino-acid chain; its full sequence is Monomethylamine methyltransferase MtmB2 (458 aa).

Position 202 (Pyl-202) is a non-standard amino acid, pyrrolysine.

Belongs to the monomethylamine methyltransferase family. As to quaternary structure, can form a complex with MtmC.

It carries out the reaction Co(I)-[methylamine-specific corrinoid protein] + methylamine + H(+) = methyl-Co(III)-[methylamine-specific corrinoid protein] + NH4(+). It participates in one-carbon metabolism; methanogenesis from methylamine. Its function is as follows. Catalyzes the transfer of the methyl group from monomethylamine to the corrinoid cofactor of MtmC. In Methanosarcina acetivorans (strain ATCC 35395 / DSM 2834 / JCM 12185 / C2A), this protein is Monomethylamine methyltransferase MtmB2 (mtmB2).